The sequence spans 187 residues: UPF0301 protein Sbal195_3177 (187 aa).

This sequence belongs to the UPF0301 (AlgH) family.

This chain is UPF0301 protein Sbal195_3177, found in Shewanella baltica (strain OS195).